The primary structure comprises 412 residues: Small ribosomal subunit protein mL103 (rPPR7) (412 aa).

The N-terminal 14 residues, 1 to 14 (MASSRISLRLVRRF), are a transit peptide targeting the mitochondrion. Positions 21 to 37 (GTTTAPSSGKISVSKAK) are enriched in polar residues. Residues 21-43 (GTTTAPSSGKISVSKAKSTLRKE) are disordered. 8 PPR repeats span residues 101–135 (EEPFYSTLIRSYGQASMFNHAMRTFEQMDQYGTPR), 136–166 (SAVSFNALLNACLHSKNFDKVPQLFDEIPQR), 173–207 (DKISYGILIKSYCDSGTPEKAIEIMRQMQGKGMEV), 208–242 (TTIAFTTILSSLYKKGELEVADNLWNEMVKKGCEL), 243–276 (DNAAYNVRIMSAQKESPERVKELIEEMSSMGLKP), 277–311 (DTISYNYLMTAYCERGMLDEAKKVYEGLEGNNCAP), 312–346 (NAATFRTLIFHLCYSRLYEQGYAIFKKSVYMHKIP), and 347–377 (DFNTLKHLVVGLVENKKRDDAKGLIRTVKKK).

It belongs to the PPR family. P subfamily. Component of the mitochondrial ribosome small subunit.

It localises to the mitochondrion. The polypeptide is Small ribosomal subunit protein mL103 (rPPR7) (Arabidopsis thaliana (Mouse-ear cress)).